A 517-amino-acid chain; its full sequence is Glucans biosynthesis protein G (517 aa).

A signal peptide spans 1–28; it reads MKHKLQMMKMRWLSAAVMLTLYTSSSWA.

This sequence belongs to the OpgD/OpgG family.

Its subcellular location is the periplasm. It participates in glycan metabolism; osmoregulated periplasmic glucan (OPG) biosynthesis. Its function is as follows. Involved in the biosynthesis of osmoregulated periplasmic glucans (OPGs). The protein is Glucans biosynthesis protein G of Escherichia coli O1:K1 / APEC.